We begin with the raw amino-acid sequence, 169 residues long: Protein-export protein SecB (169 aa).

It belongs to the SecB family. As to quaternary structure, homotetramer, a dimer of dimers. One homotetramer interacts with 1 SecA dimer.

It localises to the cytoplasm. In terms of biological role, one of the proteins required for the normal export of preproteins out of the cell cytoplasm. It is a molecular chaperone that binds to a subset of precursor proteins, maintaining them in a translocation-competent state. It also specifically binds to its receptor SecA. The chain is Protein-export protein SecB from Haemophilus influenzae (strain 86-028NP).